The primary structure comprises 88 residues: Defensin-like protein 98 (88 aa).

Residues 1–29 (MGSLRVSTVVIAVVACLSILLISPTEVDG) form the signal peptide. 4 disulfide bridges follow: C33–C76, C40–C62, C46–C73, and C50–C75.

Belongs to the DEFL family.

The protein localises to the secreted. The protein is Defensin-like protein 98 of Arabidopsis thaliana (Mouse-ear cress).